The primary structure comprises 146 residues: Large ribosomal subunit protein uL15 (146 aa).

A compositionally biased stretch (basic and acidic residues) spans M1 to R13. The segment at M1–L57 is disordered. Composition is skewed to gly residues over residues R21–A31 and S42–G52.

Belongs to the universal ribosomal protein uL15 family. Part of the 50S ribosomal subunit.

Binds to the 23S rRNA. The protein is Large ribosomal subunit protein uL15 of Bacillus subtilis (strain 168).